The primary structure comprises 203 residues: Somatotropin (203 aa).

A signal peptide spans 1–17 (MDRVVLMLSVLSLGVSS). Position 18 is a pyrrolidone carboxylic acid (Q18). Residue H36 coordinates Zn(2+). A disulfide bridge links C68 with C176. E185 is a binding site for Zn(2+). C193 and C201 are disulfide-bonded.

The protein belongs to the somatotropin/prolactin family.

The protein resides in the secreted. Growth hormone plays an important role in growth control and is involved in the regulation of several anabolic processes. Implicated as an osmoregulatory substance important for seawater adaptation. The polypeptide is Somatotropin (gh) (Pagrus major (Red sea bream)).